The chain runs to 85 residues: ATP synthase epsilon chain (85 aa).

The protein belongs to the ATPase epsilon chain family. In terms of assembly, F-type ATPases have 2 components, CF(1) - the catalytic core - and CF(0) - the membrane proton channel. CF(1) has five subunits: alpha(3), beta(3), gamma(1), delta(1), epsilon(1). CF(0) has three main subunits: a, b and c.

The protein resides in the cell membrane. Produces ATP from ADP in the presence of a proton gradient across the membrane. The sequence is that of ATP synthase epsilon chain from Frankia casuarinae (strain DSM 45818 / CECT 9043 / HFP020203 / CcI3).